Consider the following 496-residue polypeptide: Probable cytosol aminopeptidase (496 aa).

Mn(2+) contacts are provided by Lys-258 and Asp-263. Lys-270 is a catalytic residue. The Mn(2+) site is built by Asp-281, Asp-340, and Glu-342. Residue Arg-344 is part of the active site.

Belongs to the peptidase M17 family. It depends on Mn(2+) as a cofactor.

It localises to the cytoplasm. The catalysed reaction is Release of an N-terminal amino acid, Xaa-|-Yaa-, in which Xaa is preferably Leu, but may be other amino acids including Pro although not Arg or Lys, and Yaa may be Pro. Amino acid amides and methyl esters are also readily hydrolyzed, but rates on arylamides are exceedingly low.. It carries out the reaction Release of an N-terminal amino acid, preferentially leucine, but not glutamic or aspartic acids.. Functionally, presumably involved in the processing and regular turnover of intracellular proteins. Catalyzes the removal of unsubstituted N-terminal amino acids from various peptides. This Helicobacter pylori (strain Shi470) protein is Probable cytosol aminopeptidase.